We begin with the raw amino-acid sequence, 95 residues long: Protein RnfH (95 aa).

This sequence belongs to the UPF0125 (RnfH) family.

This is Protein RnfH from Methylococcus capsulatus (strain ATCC 33009 / NCIMB 11132 / Bath).